The primary structure comprises 300 residues: Tyrosine phosphatase-like protein J1 (300 aa).

The Tyrosine-protein phosphatase domain occupies 27–294 (LKREHEHIMQ…IFCYFTVLQF (268 aa)).

Belongs to the protein-tyrosine phosphatase family.

This is Tyrosine phosphatase-like protein J1 (J1) from Microplitis demolitor (Parasitoid wasp).